The primary structure comprises 719 residues: Phenylalanine--tRNA ligase beta subunit, chloroplastic (719 aa).

Positions 318-403 constitute a B5 domain; the sequence is DHALNINLSI…RIYGYHKFRS (86 aa). Positions 381, 387, 390, and 391 each coordinate Mg(2+). Residues 625–718 enclose the FDX-ACB domain; that stretch reads SKYPSIIRDL…IVKQLNLKIR (94 aa).

This sequence belongs to the phenylalanyl-tRNA synthetase beta subunit family. Type 1 subfamily. Tetramer of two alpha and two beta subunits. Mg(2+) serves as cofactor.

It localises to the plastid. It is found in the chloroplast. It catalyses the reaction tRNA(Phe) + L-phenylalanine + ATP = L-phenylalanyl-tRNA(Phe) + AMP + diphosphate + H(+). This chain is Phenylalanine--tRNA ligase beta subunit, chloroplastic, found in Pyropia yezoensis (Susabi-nori).